The chain runs to 132 residues: C-glycoside deglycosidase beta subunit (132 aa).

Belongs to the C-glycoside deglycosidase beta subunit family. Heterodimer composed of an alpha subunit (CarB2) and a beta subunit (CarC2). A divalent metal cation serves as cofactor.

It catalyses the reaction 3''-dehydroorientin = 1,5-anhydro-D-erythro-hex-1-en-3-ulose + luteolin. With respect to regulation, activity is strongly reduced in the presence of chelating agents. In terms of biological role, carbon-carbon bond-cleaving enzyme which participates in the metabolism of C-glycosides. Acts on the C8-glycosylated compound 3''-dehydroorientin (3''-oxo-orientin). This Arthrobacter globiformis (strain ATCC 8010 / DSM 20124 / JCM 1332 / NBRC 12137 / NCIMB 8907 / NRRL B-2979 / 168) protein is C-glycoside deglycosidase beta subunit.